The sequence spans 376 residues: Serine/threonine-protein kinase-transforming protein mos (376 aa).

A Protein kinase domain is found at 94–376; it reads VCLMHRLGSG…KALADSIEPM (283 aa). Residues 100–108 and Lys-121 each bind ATP; that span reads LGSGGFGSV. Catalysis depends on Asp-229, which acts as the Proton acceptor.

It belongs to the protein kinase superfamily. Ser/Thr protein kinase family.

The enzyme catalyses L-seryl-[protein] + ATP = O-phospho-L-seryl-[protein] + ADP + H(+). The catalysed reaction is L-threonyl-[protein] + ATP = O-phospho-L-threonyl-[protein] + ADP + H(+). The protein is Serine/threonine-protein kinase-transforming protein mos (V-MOS) of Moloney murine sarcoma virus (strain m1) (MoMSV).